A 235-amino-acid polypeptide reads, in one-letter code: Aspartate/glutamate leucyltransferase (235 aa).

The protein belongs to the R-transferase family. Bpt subfamily.

It is found in the cytoplasm. It catalyses the reaction N-terminal L-glutamyl-[protein] + L-leucyl-tRNA(Leu) = N-terminal L-leucyl-L-glutamyl-[protein] + tRNA(Leu) + H(+). The catalysed reaction is N-terminal L-aspartyl-[protein] + L-leucyl-tRNA(Leu) = N-terminal L-leucyl-L-aspartyl-[protein] + tRNA(Leu) + H(+). Its function is as follows. Functions in the N-end rule pathway of protein degradation where it conjugates Leu from its aminoacyl-tRNA to the N-termini of proteins containing an N-terminal aspartate or glutamate. The sequence is that of Aspartate/glutamate leucyltransferase from Pseudomonas putida (strain ATCC 47054 / DSM 6125 / CFBP 8728 / NCIMB 11950 / KT2440).